The chain runs to 205 residues: Proteasome subunit beta type-3 (205 aa).

This sequence belongs to the peptidase T1B family. As to quaternary structure, the 26S proteasome consists of a 20S proteasome core and two 19S regulatory subunits. The 20S proteasome core is composed of 28 subunits that are arranged in four stacked rings, resulting in a barrel-shaped structure. The two end rings are each formed by seven alpha subunits, and the two central rings are each formed by seven beta subunits. The catalytic chamber with the active sites is on the inside of the barrel.

The protein localises to the cytoplasm. The protein resides in the nucleus. Its function is as follows. Non-catalytic component of the proteasome, a multicatalytic proteinase complex which is characterized by its ability to cleave peptides with Arg, Phe, Tyr, Leu, and Glu adjacent to the leaving group at neutral or slightly basic pH. The proteasome has an ATP-dependent proteolytic activity. In Trypanosoma brucei brucei, this protein is Proteasome subunit beta type-3 (PSB3).